Here is a 35-residue protein sequence, read N- to C-terminus: Pheromone-binding protein 1 (35 aa).

It belongs to the PBP/GOBP family. As to quaternary structure, homodimer. Antenna.

Functionally, this major soluble protein in olfactory sensilla of male moths might serve to solubilize the extremely hydrophobic pheromone molecules and to transport pheromone through the aqueous lymph to receptors located on olfactory cilia. The chain is Pheromone-binding protein 1 from Lymantria dispar (Gypsy moth).